Reading from the N-terminus, the 293-residue chain is MEQYILKLENSINILAFLGALVSSLFYWAKLTYYKQIQVFSLPKFCLIFSNCIIAGMLLERCFRYSYFPLSNLYESLLFLSWVLNIITIIFVDKLSIIGAIGSSAVTLIIGYANYILPPSLRQTSILAPALRSNWLMMHVSVMIFSYGLLIMGAFLSLIYVIVNNNLSQKSLNRMFYLPSFYVDFDKNEPRNDIGTATINRNKLSYETIESLSYKFISLGFISLTLGIISGSVWANEAWGNYWSWDPKETWALITWLVFATYLHIRINKKWNKIYASLVASLGLIVICFVTWE.

Transmembrane regions (helical) follow at residues 12 to 32 (INIL…AKLT), 39 to 59 (VFSL…GMLL), 78 to 98 (LFLS…LSII), 99 to 119 (GAIG…ILPP), 142 to 162 (VMIF…IYVI), 216 to 236 (FISL…VWAN), 250 to 267 (TWAL…HIRI), and 273 to 293 (KIYA…VTWE).

Belongs to the CcmF/CycK/Ccl1/NrfE/CcsA family. In terms of assembly, may interact with Ccs1.

It is found in the plastid. Its subcellular location is the chloroplast thylakoid membrane. Its function is as follows. Required during biogenesis of c-type cytochromes (cytochrome c6 and cytochrome f) at the step of heme attachment. The polypeptide is Cytochrome c biogenesis protein CcsA (Cyanidium caldarium (Red alga)).